The chain runs to 413 residues: Alpha-1-antiproteinase (413 aa).

The first 24 residues, 1-24, serve as a signal peptide directing secretion; sequence MTPSISWRLLLLAGLCCLVPSYLA. Ser-33 bears the Phosphoserine mark. Asn-64, Asn-101, and Asn-265 each carry an N-linked (GlcNAc...) asparagine glycan. The interval 368-387 is RCL; that stretch reads ATTIVEAVFMSLPPILHFNH. Position 378 is a phosphoserine (Ser-378).

This sequence belongs to the serpin family. As to quaternary structure, interacts with CELA2A. Interacts with ERGIC3 and LMAN1/ERGIC53. Interacts with PRSS1/Trypsin.

It localises to the secreted. Its function is as follows. Inhibitor of serine proteases. The primary target is elastase, but also has a moderate affinity for plasmin and thrombin. This Mus saxicola (Brown spiny mouse) protein is Alpha-1-antiproteinase (Serpina1).